A 130-amino-acid polypeptide reads, in one-letter code: Small ribosomal subunit protein uS8 (130 aa).

The protein belongs to the universal ribosomal protein uS8 family. As to quaternary structure, part of the 30S ribosomal subunit. Contacts proteins S5 and S12.

Functionally, one of the primary rRNA binding proteins, it binds directly to 16S rRNA central domain where it helps coordinate assembly of the platform of the 30S subunit. The protein is Small ribosomal subunit protein uS8 of Pseudomonas fluorescens (strain ATCC BAA-477 / NRRL B-23932 / Pf-5).